The primary structure comprises 506 residues: MSSHPYVTQQNTPLADDTTLMSTTDLQSYITHANDTFVQVSGYTLQELQGQPHNMVRHPDMPKAAFADMWFTLKKGEPWSGIVKNRRKNGDHYWVRANAVPMVREGKISGYMSIRTRATDEEIAAVEPLYKALNAGRTSKRIHKGLVVRKGWLGKLPSLPLRWRARGVMTLMFILLAAMLWFVAAPVVTYILCALVVLLASACFEWQIVRPIENVAHQALKVATGERNSVEHLNRSDELGLTLRAVGQLGLMCRWLINDVSSQVSSVRNGSETLAKGTDELNEHTQQTVDNVQQTVATMNQMAASVKQNSATASAADKLSITASNAAVQGGEAMTTVIKTMDDIADSTQRIGTITSLINDIAFQTNILALNAAVEAARAGEQGKGFAVVAGEVRHLASRSANAANDIRKLIDASADKVQSGSQQVHAAGRTMEDIVAQVKNVTQLIAQISHSTLEQADGLSSLTRAVDELNLITQKNAELVEESAQVSAMVKHRASRLEDAVTVLH.

The Cytoplasmic portion of the chain corresponds to 1–166 (MSSHPYVTQQ…PSLPLRWRAR (166 aa)). A helical membrane pass occupies residues 167–186 (GVMTLMFILLAAMLWFVAAP). At 187–190 (VVTY) the chain is on the periplasmic side. The helical transmembrane segment at 191–209 (ILCALVVLLASACFEWQIV) threads the bilayer. The Cytoplasmic segment spans residues 210–506 (RPIENVAHQA…RLEDAVTVLH (297 aa)). In terms of domain architecture, Methyl-accepting transducer spans 263–492 (QVSSVRNGSE…ESAQVSAMVK (230 aa)).

It belongs to the methyl-accepting chemotaxis (MCP) protein family.

It localises to the cell inner membrane. Its function is as follows. Signal transducer for aerotaxis. The aerotactic response is the accumulation of cells around air bubbles. The nature of the sensory stimulus detected by this protein is the proton motive force or cellular redox state. It uses a FAD prosthetic group as a redox sensor to monitor oxygen levels. The polypeptide is Aerotaxis receptor (aer) (Escherichia coli (strain K12)).